The following is a 331-amino-acid chain: D-lactate/D-glycerate dehydrogenase (331 aa).

NAD(+) is bound by residues 154–155 (RI), Asp174, 205–206 (VP), Asn211, 232–234 (FAR), and Asp258. The active site involves Arg234. Residue Glu263 is part of the active site. His295 serves as the catalytic Proton donor.

This sequence belongs to the D-isomer specific 2-hydroxyacid dehydrogenase family. In terms of assembly, homodimer.

It carries out the reaction (R)-lactate + NAD(+) = pyruvate + NADH + H(+). The enzyme catalyses (R)-glycerate + NAD(+) = 3-hydroxypyruvate + NADH + H(+). Has both D-lactate and D-glycerate dehydrogenase activities. Equally active on pyruvate and hydroxypyruvate. This chain is D-lactate/D-glycerate dehydrogenase, found in Pediococcus acidilactici.